A 60-amino-acid chain; its full sequence is UPF0434 protein mma_2578 (60 aa).

The protein belongs to the UPF0434 family.

The protein is UPF0434 protein mma_2578 of Janthinobacterium sp. (strain Marseille) (Minibacterium massiliensis).